The sequence spans 304 residues: Nucleotide-binding protein SH2124 (304 aa).

Residue 19 to 26 (GLSGAGKS) coordinates ATP. 70-73 (DLRG) lines the GTP pocket.

Belongs to the RapZ-like family.

Functionally, displays ATPase and GTPase activities. This Staphylococcus haemolyticus (strain JCSC1435) protein is Nucleotide-binding protein SH2124.